Reading from the N-terminus, the 461-residue chain is Alpha-tubulin N-acetyltransferase 1 (461 aa).

The N-acetyltransferase domain occupies 2–189 (VEFRFDIKPL…NNFVLYEGFF (188 aa)). Acetyl-CoA is bound by residues 123–136 (FYVHESRQRAGLGK) and 159–168 (SEKLLSFLSK). Disordered stretches follow at residues 196–295 (NGGG…GNHD), 314–362 (NSYE…PEVA), and 418–443 (RPPGHEVTSPGQDNTDAMSTVSSGGG). Positions 233 to 254 (RRGSQQQTTPNARLQQITQISP) are enriched in polar residues. Residues 283 to 293 (GSAEANSGNGN) show a composition bias toward low complexity. Positions 318 to 336 (PEPEVEPEPEPEPEPEPEP) are enriched in acidic residues. Over residues 339–356 (ITPPSPPPKSHTPTPPSV) the composition is skewed to pro residues. The segment covering 426 to 439 (SPGQDNTDAMSTVS) has biased composition (polar residues).

It belongs to the acetyltransferase ATAT1 family.

The catalysed reaction is L-lysyl-[alpha-tubulin] + acetyl-CoA = N(6)-acetyl-L-lysyl-[alpha-tubulin] + CoA + H(+). In terms of biological role, specifically acetylates 'Lys-40' in alpha-tubulin on the lumenal side of microtubules. Promotes microtubule destabilization and accelerates microtubule dynamics; this activity may be independent of acetylation activity. Acetylates alpha-tubulin with a slow enzymatic rate, due to a catalytic site that is not optimized for acetyl transfer. Enters the microtubule through each end and diffuses quickly throughout the lumen of microtubules. Acetylates only long/old microtubules because of its slow acetylation rate since it does not have time to act on dynamically unstable microtubules before the enzyme is released. Acetylates central spindle microtubules. In Drosophila melanogaster (Fruit fly), this protein is Alpha-tubulin N-acetyltransferase 1.